A 183-amino-acid chain; its full sequence is GTP cyclohydrolase 1 (183 aa).

Positions 71, 74, and 142 each coordinate Zn(2+).

This sequence belongs to the GTP cyclohydrolase I family. Toroid-shaped homodecamer, composed of two pentamers of five dimers.

The catalysed reaction is GTP + H2O = 7,8-dihydroneopterin 3'-triphosphate + formate + H(+). Its pathway is cofactor biosynthesis; 7,8-dihydroneopterin triphosphate biosynthesis; 7,8-dihydroneopterin triphosphate from GTP: step 1/1. The sequence is that of GTP cyclohydrolase 1 from Leptospira interrogans serogroup Icterohaemorrhagiae serovar copenhageni (strain Fiocruz L1-130).